We begin with the raw amino-acid sequence, 247 residues long: ATP synthase subunit a, chloroplastic (247 aa).

The next 5 helical transmembrane spans lie at 38–58 (QVLI…TIAV), 95–115 (VPFI…GALL), 134–154 (INTT…AGLT), 199–219 (LVVV…VMLL), and 220–240 (GLFT…AYIG).

The protein belongs to the ATPase A chain family. In terms of assembly, F-type ATPases have 2 components, CF(1) - the catalytic core - and CF(0) - the membrane proton channel. CF(1) has five subunits: alpha(3), beta(3), gamma(1), delta(1), epsilon(1). CF(0) has four main subunits: a, b, b' and c.

The protein localises to the plastid. It is found in the chloroplast thylakoid membrane. Key component of the proton channel; it plays a direct role in the translocation of protons across the membrane. In Nicotiana sylvestris (Wood tobacco), this protein is ATP synthase subunit a, chloroplastic.